Consider the following 345-residue polypeptide: NADH-quinone oxidoreductase subunit H (345 aa).

Residues 1-15 are Lumenal-facing; it reads MADFWATSLGQTLIL. A helical transmembrane segment spans residues 16-35; sequence LAQGLGIIAFVMIGLLLLVW. Residues 36 to 86 lie on the Cytoplasmic side of the membrane; sequence GDRKIWAAVQMRKGPNVVGAFGLLQSVADAAKYVFKEIVVPAGVDKPVYFL. The helical transmembrane segment at 87–106 threads the bilayer; that stretch reads APMLSLVLALLAWVVVPFNE. The Lumenal segment spans residues 107–110; it reads GWVM. Residues 111–130 traverse the membrane as a helical segment; it reads ADINVAVLFVFAVSSLEVYG. Residues 131 to 156 are Cytoplasmic-facing; the sequence is VIMGGWASNSKYPFLGSLRSAAQMIS. A helical transmembrane segment spans residues 157-176; sequence YEVSMGLIIVGVIISTGSMN. The Lumenal segment spans residues 177 to 191; it reads LSAIVEAQRGDFGLL. Residues 192 to 211 form a helical membrane-spanning segment; the sequence is NWYWLPHLPMVALFFISALA. Residues 212–245 are Cytoplasmic-facing; sequence ETNRPPFDLPEAESELVAGFMVEYSSTPYLLFMA. A helical transmembrane segment spans residues 246–265; that stretch reads GEYIAVWLMCALTSVLFFGG. Residues 266 to 276 are Lumenal-facing; the sequence is WLSPIPGVPDG. Residues 277–296 form a helical membrane-spanning segment; the sequence is VLWMVAKMAAVFFVFAMVKA. The Cytoplasmic portion of the chain corresponds to 297–313; sequence IVPRYRYDQLMRIGWKV. A helical transmembrane segment spans residues 314–333; that stretch reads FLPLSLAWVVVVAFLAKFEV. Topologically, residues 334–345 are lumenal; sequence LGGFWARWSIGA.

The protein belongs to the complex I subunit 1 family. As to quaternary structure, NDH-1 is composed of 14 different subunits. Subunits NuoA, H, J, K, L, M, N constitute the membrane sector of the complex.

The protein localises to the cellular chromatophore membrane. It carries out the reaction a quinone + NADH + 5 H(+)(in) = a quinol + NAD(+) + 4 H(+)(out). Functionally, NDH-1 shuttles electrons from NADH, via FMN and iron-sulfur (Fe-S) centers, to quinones in the respiratory chain. The immediate electron acceptor for the enzyme in this species is believed to be ubiquinone. Couples the redox reaction to proton translocation (for every two electrons transferred, four hydrogen ions are translocated across the cytoplasmic membrane), and thus conserves the redox energy in a proton gradient. This subunit may bind ubiquinone. This chain is NADH-quinone oxidoreductase subunit H, found in Rhodobacter capsulatus (Rhodopseudomonas capsulata).